Reading from the N-terminus, the 150-residue chain is UPF0178 protein AHA_0543 (150 aa).

The protein belongs to the UPF0178 family.

In Aeromonas hydrophila subsp. hydrophila (strain ATCC 7966 / DSM 30187 / BCRC 13018 / CCUG 14551 / JCM 1027 / KCTC 2358 / NCIMB 9240 / NCTC 8049), this protein is UPF0178 protein AHA_0543.